Consider the following 680-residue polypeptide: Galactose oxidase (680 aa).

Positions 1-24 (MKHLLTLALCFSSINAVAVTVPHK) are cleaved as a signal peptide. The propeptide occupies 25–41 (AVGTGIPEGSLQFLSLR). In terms of domain architecture, F5/8 type C spans 42 to 189 (ASAPIGSAIS…SIAEINVFQA (148 aa)). Cysteine 59 and cysteine 68 are joined by a disulfide. Kelch repeat units follow at residues 223 to 268 (RVLM…HDMF), 279 to 321 (QIVV…TMSD), 323 to 372 (RVFT…LYRS), 436 to 490 (KILT…VLPD), and 492 to 544 (STFI…LLLP). The segment at residues 269 to 313 (CPGISMDGNGQIVVTGGNDAKKTSLYDSSSDSWIPGPDMQVARGY) is a cross-link (3'-(S-cysteinyl)-tyrosine (Cys-Tyr)). Tyrosine 313 provides a ligand contact to Cu cation. Cu cation is bound by residues tyrosine 536 and histidine 537. Tyrosine 536 functions as the Proton acceptor in the catalytic mechanism. Cysteine 556 and cysteine 559 are disulfide-bonded. Histidine 622 is a Cu cation binding site.

As to quaternary structure, monomer. Cu(2+) serves as cofactor. Post-translationally, galactose oxidase contains a protein-derived free radical cofactor. In the active state, Tyr-313, which is cross-linked to Cys-269 via a thioether bond, is oxidized to a radical and acts with Cu(2+) as a two-electron acceptor in the oxidation reaction. The cross-link is believed to modulate the redox potential of the tyrosyl radical, which is further stabilized by a stacking interaction with Trp-331 in the active site. The post-translational formation of the cross-link is closely linked to the propeptide cleavage event, and both are copper-dependent, autocatalytic processes. The propeptide may act as an intramolecular chaperone, facilitating thioester bond formation and copper binding by positioning of active-site residues, including copper ligands.

The protein localises to the secreted. It catalyses the reaction D-galactose + O2 = D-galacto-hexodialdose + H2O2. Its activity is regulated as follows. Inhibited by diethyldithiocarbamate. Functionally, catalyzes the sterospecific oxidation of primary alcohols to the corresponding aldehydes. The biologically relevant substrate of the enzyme is not known as the enzyme exhibits broad substrate specificity from small alcohols through sugars to oligo- and polysaccharides. In Gibberella zeae (Wheat head blight fungus), this protein is Galactose oxidase (GAOA).